Consider the following 117-residue polypeptide: G antigen 12H (117 aa).

Residues 1-117 (MSWRGRSTYY…PEEGEKQSQC (117 aa)) form a disordered region. Acidic residues-rich tracts occupy residues 32 to 45 (FSDEVEPATPEEGE) and 87 to 96 (ECEDGPDGQE). A compositionally biased stretch (basic and acidic residues) spans 103–117 (EEVKTPEEGEKQSQC).

Belongs to the GAGE family.

This chain is G antigen 12H (GAGE12H), found in Homo sapiens (Human).